Reading from the N-terminus, the 397-residue chain is Chorismate synthase (397 aa).

Arg-40 and Arg-46 together coordinate NADP(+). FMN-binding positions include 129–131 (RSS), 257–258 (QA), Gly-302, 317–321 (KPISS), and Arg-343.

The protein belongs to the chorismate synthase family. In terms of assembly, homotetramer. It depends on FMNH2 as a cofactor.

The enzyme catalyses 5-O-(1-carboxyvinyl)-3-phosphoshikimate = chorismate + phosphate. It functions in the pathway metabolic intermediate biosynthesis; chorismate biosynthesis; chorismate from D-erythrose 4-phosphate and phosphoenolpyruvate: step 7/7. Its function is as follows. Catalyzes the anti-1,4-elimination of the C-3 phosphate and the C-6 proR hydrogen from 5-enolpyruvylshikimate-3-phosphate (EPSP) to yield chorismate, which is the branch point compound that serves as the starting substrate for the three terminal pathways of aromatic amino acid biosynthesis. This reaction introduces a second double bond into the aromatic ring system. The polypeptide is Chorismate synthase (Chlorobium phaeovibrioides (strain DSM 265 / 1930) (Prosthecochloris vibrioformis (strain DSM 265))).